Here is a 139-residue protein sequence, read N- to C-terminus: ATP synthase epsilon chain (139 aa).

The protein belongs to the ATPase epsilon chain family. In terms of assembly, F-type ATPases have 2 components, CF(1) - the catalytic core - and CF(0) - the membrane proton channel. CF(1) has five subunits: alpha(3), beta(3), gamma(1), delta(1), epsilon(1). CF(0) has three main subunits: a, b and c.

Its subcellular location is the cell inner membrane. Produces ATP from ADP in the presence of a proton gradient across the membrane. In Actinobacillus pleuropneumoniae serotype 7 (strain AP76), this protein is ATP synthase epsilon chain.